Here is a 475-residue protein sequence, read N- to C-terminus: MAVVSEDDFQHSSNSTYRTTSSSLRADQEALLEKLLDRPPPGLQRPEDRFCGTYIIFFSLGIGSLLPWNFFITAKEYWMFKLRNSSSPATGEDPEGSDILNYFESYLAVASTVPSMLCLVANFLLVNRVAVHIRVLASLTVILAIFMVITALVKVDTSSWTRGFFAVTIVCMVILSGASTVFSSSIYGMTGSFPMRNSQALISGGAMGGTVSAVASLVDLAASSDVRNSALAFFLTATVFLVLCMGLYLLLSRLEYARYYMRPVLAAHVFSGEEELPQDSLSAPSVASRFIDSHTPPLRPILKKTASLGFCVTYVFFITSLIYPAICTNIESLNKGSGSLWTTKFFIPLTTFLLYNFADLCGRQLTAWIQVPGPNSKALPGFVLLRTCLIPLFVLCNYQPRVHLKTVVFQSDVYPALLSSLLGLSNGYLSTLALLYGPKIVPRELAEATGVVMSFYVCLGLTLGSACSTLLVHLI.

The disordered stretch occupies residues 1–24 (MAVVSEDDFQHSSNSTYRTTSSSL). At 1-53 (MAVVSEDDFQHSSNSTYRTTSSSLRADQEALLEKLLDRPPPGLQRPEDRFCGT) the chain is on the cytoplasmic side. The span at 12-23 (SSNSTYRTTSSS) shows a compositional bias: low complexity. Phosphoserine is present on residues serine 21 and serine 23. The short motif at 31-32 (LL) is the Dileucine internalization motif element. A helical transmembrane segment spans residues 54–74 (YIIFFSLGIGSLLPWNFFITA). Residues 75-105 (KEYWMFKLRNSSSPATGEDPEGSDILNYFES) are Extracellular-facing. A glycan (N-linked (GlcNAc...) asparagine) is linked at asparagine 84. The helical transmembrane segment at 106-126 (YLAVASTVPSMLCLVANFLLV) threads the bilayer. Residues 127 to 134 (NRVAVHIR) lie on the Cytoplasmic side of the membrane. Residues 135–155 (VLASLTVILAIFMVITALVKV) traverse the membrane as a helical segment. Residues 156–162 (DTSSWTR) are Extracellular-facing. A helical transmembrane segment spans residues 163–183 (GFFAVTIVCMVILSGASTVFS). The Cytoplasmic segment spans residues 184–199 (SSIYGMTGSFPMRNSQ). The helical transmembrane segment at 200 to 220 (ALISGGAMGGTVSAVASLVDL) threads the bilayer. Over 221–230 (AASSDVRNSA) the chain is Extracellular. The chain crosses the membrane as a helical span at residues 231–251 (LAFFLTATVFLVLCMGLYLLL). Topologically, residues 252-305 (SRLEYARYYMRPVLAAHVFSGEEELPQDSLSAPSVASRFIDSHTPPLRPILKKT) are cytoplasmic. The chain crosses the membrane as a helical span at residues 306–326 (ASLGFCVTYVFFITSLIYPAI). Topologically, residues 327-337 (CTNIESLNKGS) are extracellular. The helical transmembrane segment at 338-358 (GSLWTTKFFIPLTTFLLYNFA) threads the bilayer. Over 359–377 (DLCGRQLTAWIQVPGPNSK) the chain is Cytoplasmic. Residues 378–398 (ALPGFVLLRTCLIPLFVLCNY) form a helical membrane-spanning segment. Residues 399–415 (QPRVHLKTVVFQSDVYP) are Extracellular-facing. The chain crosses the membrane as a helical span at residues 416–436 (ALLSSLLGLSNGYLSTLALLY). Residues 437 to 454 (GPKIVPRELAEATGVVMS) lie on the Cytoplasmic side of the membrane. A helical membrane pass occupies residues 455-475 (FYVCLGLTLGSACSTLLVHLI).

This sequence belongs to the SLC29A/ENT transporter (TC 2.A.57) family. In terms of tissue distribution, widely expressed in both adult and fetal tissues. Highest levels in placenta, uterus, ovary, spleen, lymph node and bone marrow. Expressed in liver. Lowest levels in brain and heart. Expressed in macrophages.

Its subcellular location is the lysosome membrane. It is found in the late endosome membrane. The protein resides in the mitochondrion membrane. It localises to the cell membrane. It catalyses the reaction adenosine(in) = adenosine(out). It carries out the reaction guanosine(in) = guanosine(out). The enzyme catalyses inosine(in) = inosine(out). The catalysed reaction is uridine(out) = uridine(in). It catalyses the reaction cytidine(in) = cytidine(out). It carries out the reaction thymidine(in) = thymidine(out). The enzyme catalyses 2'-deoxyadenosine(in) = 2'-deoxyadenosine(out). The catalysed reaction is 2'-deoxycytidine(in) = 2'-deoxycytidine(out). It catalyses the reaction guanine(out) = guanine(in). It carries out the reaction uracil(in) = uracil(out). The enzyme catalyses (R)-noradrenaline(out) = (R)-noradrenaline(in). The catalysed reaction is dopamine(out) = dopamine(in). It catalyses the reaction serotonin(out) = serotonin(in). It carries out the reaction tyramine(in) = tyramine(out). The enzyme catalyses ATP(in) = ATP(out). Its function is as follows. Uniporter that mediates the facilitative transport of nucleoside across lysosomal and mitochondrial membranes. Functions as a non-electrogenic Na(+)-independent transporter. Substrate transport is pH-dependent and enhanced under acidic condition, probably reflecting the location of the transporter in acidic intracellular compartments. Proton is not a cotransporting ion but most likely change the ionization state of the transporter which dictates transport-permissible/impermissible conformation for nucleoside translocation. May direct the nucleoside transport from lysosomes to cytosol or cytosol to mitochondria to facilitate the fundamental function of salvage synthesis of nucleic acids. Involved in the transport of nucleosides (adenosine, guanosine, uridine, thymidine, cytidine and inosine) and deoxynucleosides (deoxyadenosine, deoxycytidine). Also mediates transport of purine nucleobases (adenine, guanine) and pyrimidine nucleobases (uracil). Also able to transport monoamine neurotransmitters dopamine, serotonin, noradrenaline and tyramine. Capable of transporting ATP. Mediates nucleoside export from lysosomes in macrophages, which regulates macrophage functions and numbers. In Homo sapiens (Human), this protein is Equilibrative nucleoside transporter 3.